We begin with the raw amino-acid sequence, 645 residues long: MEGPTHPKPFKDKTFSWDLIILVGVVRVLLRLDVGMANPSPHQVYNVTWVITNVQTNSQANATSMLGTLTDAYPTLHVDLCDLVGDTWEPIVLDPSNVKHGARYSSSKYGCKTTDRKKQQQTYPFYVCPGHAPSMGPKGTHCGGAHDGFCAAWGCETTGEAWWKPTSSWDYITVKRGSSQDTSCDKNCNPLVLQFTQKGRQASWDGPKLWGLRLYRTGYDPIALFSVSRQVSTIMPPQAMGPNLVLPEQKPPSRQSQTKSKVATQKPQTNGTTPRSVAPATMSPKRIGTRDRLINLVQGTYLALNATDPNKTKDCWLCLVSRPPYYEGIAILGNYSNQTNPPPSCLSTPQHKLTISEVSGQGLCIGTVPRTHQALCNKTQQGHTGAHYLAAPNGTYWACNTGLTPCISMAVLNWTSDFCVLIELWPRVTYHQPEYIYTHFDKAVRFRREPISLTVALMLGGLTVGGIAAGVGTGTKALLETAQFRQLQIAMHTDIQALEESISALEKSLTSLSEVVLQNRRGLDILFLQGGGLCAALKEECCFYADHTGLVRDNMAKLRERLKQRQQLFDSQQGWFEGWFNKSPWFTTLISSIMGPLLILLLILLFGPCILNRLVQFVKDRISVVQALILTQQYQQIQQYDPDRP.

An N-terminal signal peptide occupies residues 1–36 (MEGPTHPKPFKDKTFSWDLIILVGVVRVLLRLDVGM). Topologically, residues 37-589 (ANPSPHQVYN…FNKSPWFTTL (553 aa)) are extracellular. N-linked (GlcNAc...) asparagine; by host glycans are attached at residues Asn-46 and Asn-61. 2 cysteine pairs are disulfide-bonded: Cys-128–Cys-150 and Cys-142–Cys-155. A disordered region spans residues 238–283 (QAMGPNLVLPEQKPPSRQSQTKSKVATQKPQTNGTTPRSVAPATMS). The span at 252 to 275 (PSRQSQTKSKVATQKPQTNGTTPR) shows a compositional bias: polar residues. 3 N-linked (GlcNAc...) asparagine; by host glycosylation sites follow: Asn-270, Asn-305, and Asn-310. 3 disulfide bridges follow: Cys-315–Cys-318, Cys-315–Cys-542, and Cys-534–Cys-541. The short motif at 315 to 318 (CWLC) is the CXXC element. 5 N-linked (GlcNAc...) asparagine; by host glycosylation sites follow: Asn-334, Asn-337, Asn-377, Asn-393, and Asn-413. Residues 451–471 (ISLTVALMLGGLTVGGIAAGV) form a fusion peptide region. Coiled-coil stretches lie at residues 479–528 (LETA…ILFL) and 538–574 (KEECCFYADHTGLVRDNMAKLRERLKQRQQLFDSQQG). An immunosuppression region spans residues 517 to 533 (LQNRRGLDILFLQGGGL). The CX6CC signature appears at 534-542 (CAALKEECC). A helical transmembrane segment spans residues 590–610 (ISSIMGPLLILLLILLFGPCI). Residue Cys-609 is the site of S-palmitoyl cysteine; by host attachment. Residues 611–645 (LNRLVQFVKDRISVVQALILTQQYQQIQQYDPDRP) lie on the Cytoplasmic side of the membrane.

As to quaternary structure, the mature envelope protein (Env) consists of a trimer of SU-TM heterodimers attached by a labile interchain disulfide bond. Specific enzymatic cleavages in vivo yield mature proteins. Envelope glycoproteins are synthesized as an inactive precursor that is N-glycosylated and processed likely by host cell furin or by a furin-like protease in the Golgi to yield the mature SU and TM proteins. The cleavage site between SU and TM requires the minimal sequence [KR]-X-[KR]-R. The R-peptide is released from the C-terminus of the cytoplasmic tail of the TM protein upon particle formation as a result of proteolytic cleavage by the viral protease. Cleavage of this peptide is required for TM to become fusogenic. Post-translationally, the CXXC motif is highly conserved across a broad range of retroviral envelope proteins. It is thought to participate in the formation of a labile disulfide bond possibly with the CX6CC motif present in the transmembrane protein. Isomerization of the intersubunit disulfide bond to an SU intrachain disulfide bond is thought to occur upon receptor recognition in order to allow membrane fusion. In terms of processing, the transmembrane protein is palmitoylated. The R-peptide is palmitoylated.

It localises to the virion membrane. Its subcellular location is the host cell membrane. Its function is as follows. The surface protein (SU) attaches the virus to the host cell by binding to its receptor. This interaction triggers the refolding of the transmembrane protein (TM) and is thought to activate its fusogenic potential by unmasking its fusion peptide. Fusion occurs at the host cell plasma membrane. In terms of biological role, the transmembrane protein (TM) acts as a class I viral fusion protein. Under the current model, the protein has at least 3 conformational states: pre-fusion native state, pre-hairpin intermediate state, and post-fusion hairpin state. During viral and target cell membrane fusion, the coiled coil regions (heptad repeats) assume a trimer-of-hairpins structure, positioning the fusion peptide in close proximity to the C-terminal region of the ectodomain. The formation of this structure appears to drive apposition and subsequent fusion of viral and target cell membranes. Membranes fusion leads to delivery of the nucleocapsid into the cytoplasm. This is Envelope glycoprotein (env) from Feline sarcoma virus (strain SM) (Sm-FeSV).